Here is a 336-residue protein sequence, read N- to C-terminus: Holliday junction branch migration complex subunit RuvB (336 aa).

Residues 4 to 184 (ADRLISAGTT…FGIVQRLEFY (181 aa)) form a large ATPase domain (RuvB-L) region. Residues I23, R24, G65, K68, T69, T70, 131 to 133 (EDY), R174, Y184, and R221 each bind ATP. T69 is a Mg(2+) binding site. The interval 185-255 (QVPDLQYIVS…IAAQALDMLN (71 aa)) is small ATPAse domain (RuvB-S). The interval 258-336 (AEGFDYMDRK…HFGITPPEMP (79 aa)) is head domain (RuvB-H). DNA-binding residues include R294, R313, and R318.

The protein belongs to the RuvB family. In terms of assembly, homohexamer. Forms an RuvA(8)-RuvB(12)-Holliday junction (HJ) complex. HJ DNA is sandwiched between 2 RuvA tetramers; dsDNA enters through RuvA and exits via RuvB. An RuvB hexamer assembles on each DNA strand where it exits the tetramer. Each RuvB hexamer is contacted by two RuvA subunits (via domain III) on 2 adjacent RuvB subunits; this complex drives branch migration. In the full resolvosome a probable DNA-RuvA(4)-RuvB(12)-RuvC(2) complex forms which resolves the HJ.

It is found in the cytoplasm. The catalysed reaction is ATP + H2O = ADP + phosphate + H(+). The RuvA-RuvB-RuvC complex processes Holliday junction (HJ) DNA during genetic recombination and DNA repair, while the RuvA-RuvB complex plays an important role in the rescue of blocked DNA replication forks via replication fork reversal (RFR). RuvA specifically binds to HJ cruciform DNA, conferring on it an open structure. The RuvB hexamer acts as an ATP-dependent pump, pulling dsDNA into and through the RuvAB complex. RuvB forms 2 homohexamers on either side of HJ DNA bound by 1 or 2 RuvA tetramers; 4 subunits per hexamer contact DNA at a time. Coordinated motions by a converter formed by DNA-disengaged RuvB subunits stimulates ATP hydrolysis and nucleotide exchange. Immobilization of the converter enables RuvB to convert the ATP-contained energy into a lever motion, pulling 2 nucleotides of DNA out of the RuvA tetramer per ATP hydrolyzed, thus driving DNA branch migration. The RuvB motors rotate together with the DNA substrate, which together with the progressing nucleotide cycle form the mechanistic basis for DNA recombination by continuous HJ branch migration. Branch migration allows RuvC to scan DNA until it finds its consensus sequence, where it cleaves and resolves cruciform DNA. The protein is Holliday junction branch migration complex subunit RuvB of Shigella sonnei (strain Ss046).